The primary structure comprises 37 residues: Defensin-A (37 aa).

3 cysteine pairs are disulfide-bonded: Cys4-Cys25, Cys10-Cys33, and Cys14-Cys35.

It is found in the secreted. Functionally, has antibacterial activity against M.luteus and E.coli. This Mytilus edulis (Blue mussel) protein is Defensin-A.